The primary structure comprises 143 residues: Putative pre-16S rRNA nuclease (143 aa).

This sequence belongs to the YqgF nuclease family.

It is found in the cytoplasm. Functionally, could be a nuclease involved in processing of the 5'-end of pre-16S rRNA. This chain is Putative pre-16S rRNA nuclease, found in Lactococcus lactis subsp. cremoris (strain SK11).